Consider the following 311-residue polypeptide: Pyrimidine-specific ribonucleoside hydrolase RihA (311 aa).

Histidine 240 is an active-site residue.

Belongs to the IUNH family. RihA subfamily.

In terms of biological role, hydrolyzes cytidine or uridine to ribose and cytosine or uracil, respectively. The chain is Pyrimidine-specific ribonucleoside hydrolase RihA from Shigella boydii serotype 4 (strain Sb227).